Consider the following 353-residue polypeptide: Rhodopsin (353 aa).

Over 1–36 (MNGTEGPYFYIPMVNTTGIVRSPYEYPQYYLVNPAA) the chain is Extracellular. N-linked (GlcNAc...) asparagine glycosylation is found at Asn-2 and Asn-15. The helical transmembrane segment at 37-61 (YAALGAYMFLLILIGFPVNFLTLYV) threads the bilayer. Residues 62-73 (TIEHKKLRTPLN) lie on the Cytoplasmic side of the membrane. Residues 74–96 (YILLNLAVADLFMVFGGFTTTMY) traverse the membrane as a helical segment. Residues 97 to 110 (TSMHGYFVLGRLGC) are Extracellular-facing. Cys-110 and Cys-187 are disulfide-bonded. Residues 111-133 (NLEGFFATLGGEIALWSLVVLAV) traverse the membrane as a helical segment. Residues 134-136 (ERW) carry the 'Ionic lock' involved in activated form stabilization motif. Topologically, residues 134 to 152 (ERWMVVCKPISNFRFGEDH) are cytoplasmic. A helical membrane pass occupies residues 153 to 173 (AIMGLAFTWVMAAACAVPPLV). Residues 174–202 (GWSRYIPEGMQCSCGIDYYTRAEGFNNES) lie on the Extracellular side of the membrane. N-linked (GlcNAc...) asparagine glycosylation occurs at Asn-200. A helical transmembrane segment spans residues 203 to 224 (FVIYMFVCHFLIPLVVVFFCYG). The Cytoplasmic portion of the chain corresponds to 225–252 (RLLCAVKEAAAAQQESETTQRAEREVSR). A helical membrane pass occupies residues 253 to 274 (MVVIMVVAFLVCWCPYAGVAWY). At 275–286 (IFTHQGSEFGPL) the chain is on the extracellular side. A helical membrane pass occupies residues 287–308 (FMTFPAFFAKSSSIYNPMIYIC). Lys-296 is modified (N6-(retinylidene)lysine). The Cytoplasmic segment spans residues 309 to 353 (MNKQFRQCMITTLCCGKNPFEEEEGASTTSKTEASSVSSSSVSPA). Residues Cys-322 and Cys-323 are each lipidated (S-palmitoyl cysteine). The segment at 329 to 353 (EEEEGASTTSKTEASSVSSSSVSPA) is disordered. The span at 334–353 (ASTTSKTEASSVSSSSVSPA) shows a compositional bias: low complexity.

It belongs to the G-protein coupled receptor 1 family. Opsin subfamily. Post-translationally, phosphorylated on some or all of the serine and threonine residues present in the C-terminal region. In terms of processing, contains one covalently linked retinal chromophore.

It is found in the membrane. It localises to the cell projection. The protein resides in the cilium. The protein localises to the photoreceptor outer segment. Functionally, photoreceptor required for image-forming vision at low light intensity. While most salt water fish species use retinal as chromophore, most freshwater fish use 3-dehydroretinal, or a mixture of retinal and 3-dehydroretinal. Light-induced isomerization of 11-cis to all-trans retinal triggers a conformational change that activates signaling via G-proteins. Subsequent receptor phosphorylation mediates displacement of the bound G-protein alpha subunit by arrestin and terminates signaling. The polypeptide is Rhodopsin (rho) (Chelon auratus (Golden grey mullet)).